Consider the following 1299-residue polypeptide: DNA-directed RNA polymerase subunit beta' (1299 aa).

Residues Cys-60, Cys-62, Cys-75, and Cys-78 each contribute to the Zn(2+) site. The disordered stretch occupies residues 188 to 209 (GAKSDQKRRAKDGAEKEMGQTR). The Mg(2+) site is built by Asp-535, Asp-537, and Asp-539. Zn(2+)-binding residues include Cys-882, Cys-959, Cys-966, and Cys-969.

The protein belongs to the RNA polymerase beta' chain family. The RNAP catalytic core consists of 2 alpha, 1 beta, 1 beta' and 1 omega subunit. When a sigma factor is associated with the core the holoenzyme is formed, which can initiate transcription. It depends on Mg(2+) as a cofactor. Zn(2+) serves as cofactor.

It carries out the reaction RNA(n) + a ribonucleoside 5'-triphosphate = RNA(n+1) + diphosphate. Its function is as follows. DNA-dependent RNA polymerase catalyzes the transcription of DNA into RNA using the four ribonucleoside triphosphates as substrates. This is DNA-directed RNA polymerase subunit beta' from Clavibacter michiganensis subsp. michiganensis (strain NCPPB 382).